Consider the following 269-residue polypeptide: uncharacterized protein (269 aa).

Residues 152-197 (RYFSKPAYRNAFKANTIRATTAYKKVFNDPSLGSTYPLEVPLGKMS) form the RPE1 insert domain.

This is an uncharacterized protein from Rickettsia prowazekii (strain Madrid E).